The chain runs to 208 residues: Ribosomal RNA large subunit methyltransferase E (208 aa).

S-adenosyl-L-methionine is bound by residues G62, W64, D82, D98, and D123. K163 acts as the Proton acceptor in catalysis.

This sequence belongs to the class I-like SAM-binding methyltransferase superfamily. RNA methyltransferase RlmE family.

The protein localises to the cytoplasm. The enzyme catalyses uridine(2552) in 23S rRNA + S-adenosyl-L-methionine = 2'-O-methyluridine(2552) in 23S rRNA + S-adenosyl-L-homocysteine + H(+). Specifically methylates the uridine in position 2552 of 23S rRNA at the 2'-O position of the ribose in the fully assembled 50S ribosomal subunit. The chain is Ribosomal RNA large subunit methyltransferase E from Mannheimia succiniciproducens (strain KCTC 0769BP / MBEL55E).